The chain runs to 140 residues: uncharacterized protein (140 aa).

This is an uncharacterized protein from Fowlpox virus (strain NVSL) (FPV).